The sequence spans 390 residues: ASAGGGCRRGPSFSPGSIPSLAAERAPDPPLAMAGNVKKSSGAGGGGSGGSGAGGLIGLMKDAFQPHHHHHHLSPHPPCTVDKKMVEKCWKLMDKVVRLCQNPNVALKNSPPYILDLLPDTYQHLRTVLSRYEGKMETLGENEYFRVFMENLMKKTKQTISLFKEGKERMYEENSQPRRNLTKLSLIFSHMLAELKGIFPSGLFQGDTFRITKADAAEFWRKAFGEKTIVPWKSFRQALHEVHPISSGLEAMALKSTIDLTCNDYISVFEFDIFTRLFQPWSSLLRNWNSLAVTHPGYMAFLTYDEVKARLQKFIHKPGSYIFRLSCTRLGQWAIGYVTADGNILQTIPHNKPLFQALIDGFREGFYLFPDGRNQNPDLTGLCEPTPHFS.

Positions 1 to 52 (ASAGGGCRRGPSFSPGSIPSLAAERAPDPPLAMAGNVKKSSGAGGGGSGGSG) are disordered. Residues 42–52 (GAGGGGSGGSG) are compositionally biased toward gly residues. The segment at 77 to 205 (PPCTVDKKMV…KGIFPSGLFQ (129 aa)) is 4H. One can recognise a Cbl-PTB domain in the interval 77-381 (PPCTVDKKMV…GRNQNPDLTG (305 aa)). The tract at residues 206-278 (GDTFRITKAD…FEFDIFTRLF (73 aa)) is EF-hand-like. Ca(2+) contacts are provided by aspartate 259, threonine 261, asparagine 263, tyrosine 265, and glutamate 270. The interval 279 to 381 (QPWSSLLRNW…GRNQNPDLTG (103 aa)) is SH2-like. Arginine 324 is a 4-O-phospho-L-tyrosine binding site.

Functionally, induces early B-lineage lymphomas. This Mus musculus (Mouse) protein is Transforming protein cbl (V-CBL).